A 521-amino-acid polypeptide reads, in one-letter code: Glucose-6-phosphate isomerase (521 aa).

Glutamate 327 functions as the Proton donor in the catalytic mechanism. Catalysis depends on residues histidine 358 and lysine 486.

The protein belongs to the GPI family.

The protein resides in the cytoplasm. It catalyses the reaction alpha-D-glucose 6-phosphate = beta-D-fructose 6-phosphate. It functions in the pathway carbohydrate biosynthesis; gluconeogenesis. It participates in carbohydrate degradation; glycolysis; D-glyceraldehyde 3-phosphate and glycerone phosphate from D-glucose: step 2/4. Functionally, catalyzes the reversible isomerization of glucose-6-phosphate to fructose-6-phosphate. This is Glucose-6-phosphate isomerase from Bordetella petrii (strain ATCC BAA-461 / DSM 12804 / CCUG 43448).